A 379-amino-acid polypeptide reads, in one-letter code: Epoxyqueuosine reductase (379 aa).

The active-site Proton donor is Asp139. In terms of domain architecture, 4Fe-4S ferredoxin-type spans 181–213 (IPLPVDQPVEEGCGKCVACMTICPTGAIVEPYT). Positions 193, 196, 199, 203, 219, 246, 249, and 253 each coordinate [4Fe-4S] cluster.

It belongs to the QueG family. As to quaternary structure, monomer. Requires cob(II)alamin as cofactor. It depends on [4Fe-4S] cluster as a cofactor.

The protein localises to the cytoplasm. The catalysed reaction is epoxyqueuosine(34) in tRNA + AH2 = queuosine(34) in tRNA + A + H2O. Its pathway is tRNA modification; tRNA-queuosine biosynthesis. Its function is as follows. Catalyzes the conversion of epoxyqueuosine (oQ) to queuosine (Q), which is a hypermodified base found in the wobble positions of tRNA(Asp), tRNA(Asn), tRNA(His) and tRNA(Tyr). This is Epoxyqueuosine reductase from Shigella dysenteriae serotype 1 (strain Sd197).